Consider the following 755-residue polypeptide: SWI/SNF-related matrix-associated actin-dependent regulator of chromatin subfamily A-like protein 1 (755 aa).

Residues 7 to 27 (SEIAEKKRIALAKLQAKKSQL) adopt a coiled-coil conformation. 2 disordered regions span residues 26 to 91 (QLLA…NKSS) and 104 to 134 (SNRE…SLSS). A compositionally biased stretch (polar residues) spans 32–63 (PATNGKSTTSATGATQHANNGKSNPNQPQAKS). Phosphoserine is present on S63. In terms of domain architecture, HARP spans 139–217 (PVAVLLGNSI…KPYVHMNGIP (79 aa)). Positions 256 to 412 (CFAIAQKGRI…FTQLQMIDGK (157 aa)) constitute a Helicase ATP-binding domain. 269-276 (DEMGLGKT) serves as a coordination point for ATP. A DESH box motif is present at residues 361–364 (DESH). One can recognise a Helicase C-terminal domain in the interval 527–681 (YLKTLVKEQK…NLQKATHTAA (155 aa)).

It belongs to the SNF2/RAD54 helicase family. SMARCAL1 subfamily.

The protein resides in the nucleus. ATP-dependent annealing helicase that catalyzes the rewinding of the stably unwound DNA. In Drosophila melanogaster (Fruit fly), this protein is SWI/SNF-related matrix-associated actin-dependent regulator of chromatin subfamily A-like protein 1 (Marcal1).